Here is a 580-residue protein sequence, read N- to C-terminus: Keratin, type II cytoskeletal 5 (580 aa).

The segment at 1-161 is head; that stretch reads MSRQSSVSFR…DPTIQRVRTE (161 aa). 4 positions are modified to phosphoserine: S5, S8, S16, and S21. A Phosphothreonine; by CDK1 modification is found at T24. A phosphoserine mark is found at S26, S36, S47, S61, S68, S72, S75, and S79. T145 carries the phosphothreonine; by CDK1 modification. At T160 the chain carries Phosphothreonine; by AURKB. The interval 162–197 is coil 1A; it reads EREQIKTLNNKFASFIDKVRFLEQQNKVLDTKWALL. Residues 162–475 form the IF rod domain; that stretch reads EREQIKTLNN…KLLEGEECRL (314 aa). Residues 198–216 form a linker 1 region; that stretch reads QEQGTKTIKQNLDPLFEQY. The coil 1B stretch occupies residues 217–309; the sequence is INNLRRQLDG…FFDAELSQMQ (93 aa). The linker 12 stretch occupies residues 310–332; it reads THVSDTSVVLSMDNNRSLDLDSI. The segment at 333–471 is coil 2; sequence IAEVKAQYED…ATYRKLLEGE (139 aa). The interval 472-580 is tail; that stretch reads ECRLSGEGVG…TSSSRRSFKS (109 aa). Residue R526 is modified to Omega-N-methylarginine. Residues 555–580 form a disordered region; it reads FGSGGGSGSSVKFVSTTSSSRRSFKS. A compositionally biased stretch (low complexity) spans 563-580; sequence SSVKFVSTTSSSRRSFKS.

This sequence belongs to the intermediate filament family. In terms of assembly, heterodimer of a type I and a type II keratin. Heterodimer with type I keratin KRT25 leading to the formation of keratin intermediate filament (KIF) network. Forms a heterodimer (via 2B domains) with KRT14 (via 2B domains). Interacts with PLEC isoform 1C, when in a heterodimer with KRT14. Interacts with TCHP. Interacts with EPPK1. Interacts with AMELX. Interacts with PKP1 (via N-terminus) and PKP2. Phosphorylated by CDK1, AURKB and Rho-kinase, phosphorylation is regulated by the cell cycle. Thr-24 phosphorylation, mediated by CDK1, peaks during prometaphase or metaphase cells with phosphorylated filamentous structures evident throughout the cytoplasm during early mitosis. CDK1 phosphorylates Thr-24 in mitotic cells at the site of injury. Post-translationally, O-glycosylated. In terms of tissue distribution, expressed in the corneal epithelium (at protein level). Expressed in the epidermis of the ear (at protein level). Expressed in the basal and spinous layers of the skin at birth (at protein level).

The protein resides in the cytoplasm. Its function is as follows. Required for the formation of keratin intermediate filaments in the basal epidermis and maintenance of the skin barrier in response to mechanical stress. Regulates the recruitment of Langerhans cells to the epidermis, potentially by modulation of the abundance of macrophage chemotactic cytokines, macrophage inflammatory cytokines and CTNND1 localization in keratinocytes. The sequence is that of Keratin, type II cytoskeletal 5 from Mus musculus (Mouse).